Consider the following 235-residue polypeptide: Secretory carrier-associated membrane protein 5B (235 aa).

Residues 1–39 (MSDKPNNFPPLPRFIPLKPCFYQDFDTDIPDVHRTTAKR) lie on the Cytoplasmic side of the membrane. A helical transmembrane segment spans residues 40–60 (LYYLWMLNSITLGVNLIGCLA). The Extracellular segment spans residues 61–67 (WLIGGGG). The helical transmembrane segment at 68–88 (ATNFGLAFLWLILFTPCSYVC) threads the bilayer. Residues 89–102 (WFRPIYKAFKTDSS) are Cytoplasmic-facing. A helical membrane pass occupies residues 103–125 (FNFMAFFFTFTGQLVISIIQAVG). At 126–148 (IPGWGVCGWIASISFFGTNVGSA) the chain is on the extracellular side. Residues 149 to 169 (VVMLIPTIMFTAVAVLSFVAL) traverse the membrane as a helical segment. The Cytoplasmic segment spans residues 170–235 (TKVHRFYRGA…TPNYGYSNQM (66 aa)).

The protein belongs to the SCAMP family. SCAMP5 subfamily.

The protein localises to the cell membrane. It is found in the golgi apparatus membrane. It localises to the golgi apparatus. Its subcellular location is the trans-Golgi network membrane. The protein resides in the recycling endosome membrane. The protein localises to the cytoplasmic vesicle. It is found in the secretory vesicle. It localises to the synaptic vesicle membrane. Functionally, required for the calcium-dependent exocytosis of signal sequence-containing cytokines. Probably acts in cooperation with the SNARE machinery. In Xenopus laevis (African clawed frog), this protein is Secretory carrier-associated membrane protein 5B (scamp5-b).